An 867-amino-acid chain; its full sequence is GRB2-associated and regulator of MAPK protein 1 (867 aa).

Residues 12–322 (NNITWSTTTL…GLLQGESWFE (311 aa)) form a CABIT region. Tyr464 carries the phosphotyrosine modification. Disordered stretches follow at residues 511–530 (SADVNLPPPPVPPKSEAVKE), 536–594 (DAPP…QIES), and 735–758 (PPRTPKCTDAKKDAEAATTDTADA). Polar residues-rich tracts occupy residues 544-554 (SSKQAGSSSAT) and 569-581 (SPSPTLSYYSSGL). Over residues 740-749 (KCTDAKKDAE) the composition is skewed to basic and acidic residues. Residues 802–867 (ISIEEISKSL…QFINGWRPKM (66 aa)) enclose the SAM domain.

This sequence belongs to the GAREM family.

Its function is as follows. Adapter protein that may provide a link between cell surface epidermal growth factor receptor and the MAPK/ERK signaling pathway. May promote cell proliferation. In Danio rerio (Zebrafish), this protein is GRB2-associated and regulator of MAPK protein 1 (garem1).